Here is a 543-residue protein sequence, read N- to C-terminus: Ipecoside beta-D-glucosidase IpeGLU1 (543 aa).

A beta-D-glucoside is bound by residues Gln-36, His-140, 185–186 (NE), Tyr-350, Glu-422, Trp-471, and Phe-487. Catalysis depends on Glu-186, which acts as the Proton donor. Glu-422 acts as the Nucleophile in catalysis.

Belongs to the glycosyl hydrolase 1 family. Expressed in roots.

It is found in the cytoplasm. The protein localises to the cytosol. The catalysed reaction is deacetylipecoside + H2O = deacetylipecoside aglycone + D-glucose. It catalyses the reaction deacetylisoipecoside + H2O = deacetylisoipecoside aglycone + D-glucose. It carries out the reaction 6-O-methyldeacetylipecoside + H2O = 6-O-methyldeacetylipecoside aglycone + D-glucose. The enzyme catalyses 6-O-methyldeacetylisoipecoside + H2O = 6-O-methyldeacetylisoipecoside aglycone + D-glucose. The catalysed reaction is ipecoside + H2O = ipecoside aglycone + D-glucose. It catalyses the reaction 3alpha(S)-strictosidine + H2O = strictosidine aglycone + D-glucose. Its pathway is alkaloid biosynthesis. Its activity is regulated as follows. Inhibited by Cu(2+), Fe(2+) and Zn(2+). Beta-glucosidase involved in the biosynthesis of ipecac and benzylisoquinoline monoterpenoid-isoquinoline alkaloids natural products, starting by the condensation of dopamine and secologanin, and including emetine and cephaeline, drugs used both as anti-protozoal (e.g. treatment of ameobiasis) and as emetic agents. In response to pathogen and herbivore attack, triggers the release of toxic ipecoside aglycon to trigger defense responses. Catalyzes deglucosylation both on (1S)-diastereomer and (1R)-diastereomer substrates, including ipecoside, the main alkaloidal glucoside. Also active on N-deacetylisoipecoside, 6-O-methyl-N-deacetylisoipecoside, 6-O-methyl-N-deacetylipecoside and N-deacetylipecoside. In Carapichea ipecacuanha (Ipecac), this protein is Ipecoside beta-D-glucosidase IpeGLU1.